Consider the following 380-residue polypeptide: Crotonobetainyl-CoA reductase (380 aa).

This sequence belongs to the acyl-CoA dehydrogenase family. In terms of assembly, homotetramer. Requires FAD as cofactor.

Its subcellular location is the cytoplasm. It carries out the reaction 4-(trimethylamino)butanoyl-CoA + oxidized [electron-transfer flavoprotein] + H(+) = crotonobetainyl-CoA + reduced [electron-transfer flavoprotein]. The protein operates within amine and polyamine metabolism; carnitine metabolism. Functionally, catalyzes the reduction of crotonobetainyl-CoA to gamma-butyrobetainyl-CoA. This chain is Crotonobetainyl-CoA reductase, found in Citrobacter koseri (strain ATCC BAA-895 / CDC 4225-83 / SGSC4696).